The following is a 76-amino-acid chain: Defensin-like protein 164 (76 aa).

The N-terminal stretch at 1-25 (MAKLLCSYLFICMFVLSGFLVFSSA) is a signal peptide. Cystine bridges form between C31–C76, C41–C61, C46–C70, and C50–C72.

The protein belongs to the DEFL family.

Its subcellular location is the secreted. In Arabidopsis thaliana (Mouse-ear cress), this protein is Defensin-like protein 164 (LCR38).